Here is a 141-residue protein sequence, read N- to C-terminus: Large ribosomal subunit protein uL11 (141 aa).

This sequence belongs to the universal ribosomal protein uL11 family. In terms of assembly, part of the ribosomal stalk of the 50S ribosomal subunit. Interacts with L10 and the large rRNA to form the base of the stalk. L10 forms an elongated spine to which L12 dimers bind in a sequential fashion forming a multimeric L10(L12)X complex. Post-translationally, one or more lysine residues are methylated.

In terms of biological role, forms part of the ribosomal stalk which helps the ribosome interact with GTP-bound translation factors. This Synechococcus sp. (strain JA-3-3Ab) (Cyanobacteria bacterium Yellowstone A-Prime) protein is Large ribosomal subunit protein uL11.